Reading from the N-terminus, the 280-residue chain is Phosphonates import ATP-binding protein PhnC (280 aa).

The region spanning 4–239 (ITVTNLHKSY…VIDDIYGNIQ (236 aa)) is the ABC transporter domain. 36 to 43 (GESGAGKS) is a binding site for ATP. The disordered stretch occupies residues 246-280 (GDDANADVAPTTSSDGGTDAAGGPDQQPASDPHLS).

Belongs to the ABC transporter superfamily. Phosphonates importer (TC 3.A.1.9.1) family. The complex is composed of two ATP-binding proteins (PhnC), two transmembrane proteins (PhnE) and a solute-binding protein (PhnD).

Its subcellular location is the cell membrane. It catalyses the reaction phosphonate(out) + ATP + H2O = phosphonate(in) + ADP + phosphate + H(+). Part of the ABC transporter complex PhnCDE involved in phosphonates import. Responsible for energy coupling to the transport system. This is Phosphonates import ATP-binding protein PhnC from Halobacterium salinarum (strain ATCC 700922 / JCM 11081 / NRC-1) (Halobacterium halobium).